A 43-amino-acid polypeptide reads, in one-letter code: Phi-Lf prophage-derived putative minor coat protein (43 aa).

The chain is Phi-Lf prophage-derived putative minor coat protein (gVII-1) from Xanthomonas campestris pv. campestris (strain ATCC 33913 / DSM 3586 / NCPPB 528 / LMG 568 / P 25).